Here is a 211-residue protein sequence, read N- to C-terminus: Large ribosomal subunit protein uL4 (211 aa).

The segment at 44 to 90 (ERQGTHSTLTKGEVRGGGKKPWRQKHTGKARTGSTRNPHWTGGGVVF) is disordered. Over residues 60-72 (GGKKPWRQKHTGK) the composition is skewed to basic residues.

This sequence belongs to the universal ribosomal protein uL4 family. Part of the 50S ribosomal subunit.

Functionally, one of the primary rRNA binding proteins, this protein initially binds near the 5'-end of the 23S rRNA. It is important during the early stages of 50S assembly. It makes multiple contacts with different domains of the 23S rRNA in the assembled 50S subunit and ribosome. In terms of biological role, forms part of the polypeptide exit tunnel. This is Large ribosomal subunit protein uL4 from Ureaplasma parvum serovar 3 (strain ATCC 27815 / 27 / NCTC 11736).